The sequence spans 1058 residues: Structural maintenance of chromosomes protein 6A (1058 aa).

The Zinc-hook domain occupies 23–1049 (ILRIRLENFM…SMVKSHEKIK (1027 aa)). 50–57 (GQNGSGKS) serves as a coordination point for ATP. A coiled-coil region spans residues 136-449 (KISSRKEELR…NDLKKHQTNK (314 aa)). Residues 450-633 (VTAFGGDKVI…PPRPRRPTRL (184 aa)) are flexible hinge. Positions 634 to 927 (CASFDDQIKD…RNKDLLKREL (294 aa)) form a coiled coil.

The protein belongs to the SMC family. SMC6 subfamily. In terms of assembly, forms a heterodimer with SMC5. The SMC5-SMC6 complex is composed of the SMC5 and SMC6 heterodimer attached via their hinge domain and from the non-SMC subunit NSE4A or NSE4B. In terms of tissue distribution, expressed in seedlings, rosette leaves and floral buds.

It localises to the nucleus. The protein localises to the chromosome. Functionally, core component of the SMC5-SMC6 complex that promotes sister chromatid alignment after DNA damage and facilitates double-stranded DNA breaks (DSBs) repair via homologous recombination between sister chromatids. The polypeptide is Structural maintenance of chromosomes protein 6A (SMC6A) (Arabidopsis thaliana (Mouse-ear cress)).